The sequence spans 466 residues: Ribulose bisphosphate carboxylase large chain (466 aa).

Residue Lys-5 is modified to N6,N6,N6-trimethyllysine. Residues Asn-114 and Thr-164 each coordinate substrate. Lys-166 acts as the Proton acceptor in catalysis. Substrate is bound at residue Lys-168. Mg(2+) contacts are provided by Lys-192, Asp-194, and Glu-195. N6-carboxylysine is present on Lys-192. The active-site Proton acceptor is the His-285. Residues Arg-286, His-318, and Ser-370 each contribute to the substrate site.

Belongs to the RuBisCO large chain family. Type I subfamily. As to quaternary structure, heterohexadecamer of 8 large chains and 8 small chains; disulfide-linked. The disulfide link is formed within the large subunit homodimers. Requires Mg(2+) as cofactor. Post-translationally, the disulfide bond which can form in the large chain dimeric partners within the hexadecamer appears to be associated with oxidative stress and protein turnover.

It localises to the plastid. It is found in the chloroplast. The catalysed reaction is 2 (2R)-3-phosphoglycerate + 2 H(+) = D-ribulose 1,5-bisphosphate + CO2 + H2O. It catalyses the reaction D-ribulose 1,5-bisphosphate + O2 = 2-phosphoglycolate + (2R)-3-phosphoglycerate + 2 H(+). Functionally, ruBisCO catalyzes two reactions: the carboxylation of D-ribulose 1,5-bisphosphate, the primary event in carbon dioxide fixation, as well as the oxidative fragmentation of the pentose substrate in the photorespiration process. Both reactions occur simultaneously and in competition at the same active site. The protein is Ribulose bisphosphate carboxylase large chain of Oxalis dillenii (Gray-green wood sorrel).